We begin with the raw amino-acid sequence, 31 residues long: Cytochrome b6-f complex subunit 6 (31 aa).

The chain crosses the membrane as a helical span at residues 4-24 (ITSFFGFLLAALTITSVLFIG).

This sequence belongs to the PetL family. As to quaternary structure, the 4 large subunits of the cytochrome b6-f complex are cytochrome b6, subunit IV (17 kDa polypeptide, PetD), cytochrome f and the Rieske protein, while the 4 small subunits are PetG, PetL, PetM and PetN. The complex functions as a dimer.

The protein localises to the plastid. It localises to the chloroplast thylakoid membrane. In terms of biological role, component of the cytochrome b6-f complex, which mediates electron transfer between photosystem II (PSII) and photosystem I (PSI), cyclic electron flow around PSI, and state transitions. PetL is important for photoautotrophic growth as well as for electron transfer efficiency and stability of the cytochrome b6-f complex. The sequence is that of Cytochrome b6-f complex subunit 6 from Oenothera elata subsp. hookeri (Hooker's evening primrose).